The chain runs to 515 residues: Nectin-1 (515 aa).

The signal sequence occupies residues 1 to 30 (MARMGLAGAAGRWWGLALGLTAFFLPGTHT). The Ig-like V-type domain maps to 31–141 (QVVQVNDSMY…GNRESQLNLT (111 aa)). The Extracellular portion of the chain corresponds to 31–354 (QVVQVNDSMY…GRRAGQMPTA (324 aa)). Residues asparagine 36, asparagine 72, asparagine 139, asparagine 202, asparagine 286, asparagine 297, and asparagine 332 are each glycosylated (N-linked (GlcNAc...) asparagine). Cysteine 51 and cysteine 124 form a disulfide bridge. Ig-like C2-type domains are found at residues 145 to 243 (KPTN…TLNV) and 247 to 334 (PEVT…VNIT). 2 disulfide bridges follow: cysteine 172-cysteine 226 and cysteine 269-cysteine 316. Positions 282–299 (WTTLNGSLPKGVEAQNRT) are interaction with FGFR. A helical transmembrane segment spans residues 355 to 375 (IIGGVAGSVLLVLIVVGGIIV). At 376 to 515 (ALRRRRHTFK…SFISKKEWYV (140 aa)) the chain is on the cytoplasmic side. Residues 399–486 (YSKAGIPQHH…DGYGDRTLGY (88 aa)) form a disordered region. Residues serine 421, serine 433, and serine 434 each carry the phosphoserine modification. Tyrosine 435 bears the Phosphotyrosine mark. The span at 447–464 (GERKVGGPHPKYDEDAKR) shows a compositional bias: basic and acidic residues. Residue serine 509 is modified to Phosphoserine.

This sequence belongs to the nectin family. Cis- and trans-homodimer. Can form trans-heterodimers with NECTIN3 and with NECTIN4. Interaction between NECTIN1 and NECTIN3 on the pre- and postsynaptic sites, respectively, initiates the formation of puncta adherentia junctions between axons and dendrites. Interacts (via cytoplasmic domain) with AFDN (via PDZ domain); this interaction recruits NECTIN1 to cadherin-based adherens junctions and provides a connection with the actin cytoskeleton. Interacts with integrin alphaV/beta3. Interacts (via Ig-like C2-type domain 2) with FGFR1, FGFR2 and FGFR3. In terms of assembly, (Microbial infection) Interacts with herpes pseudorabies virus/PRV envelope glycoprotein D.

It is found in the cell membrane. It localises to the cell junction. The protein localises to the adherens junction. Its subcellular location is the presynaptic cell membrane. In terms of biological role, cell adhesion molecule that promotes cell-cell contacts and plays important roles in the development of the nervous system. Acts by forming homophilic or heterophilic trans-dimers. Heterophilic interactions have been detected between NECTIN1 and NECTIN3 and between NECTIN1 and NECTIN4. Involved in axon guidance by promoting contacts between the commissural axons and the floor plate cells. Involved in synaptogegesis. Has some neurite outgrowth-promoting activity. Promotes formation of checkerboard-like cellular pattern of hair cells and supporting cells in the auditory epithelium via heterophilic interaction with NECTIN3: NECTIN1 is present in the membrane of hair cells and associates with NECTIN3 on supporting cells, thereby mediating heterotypic adhesion between these two cell types. Required for enamel mineralization. Functionally, (Microbial infection) Acts as a receptor for pseudorabies virus/PRV. In Mus musculus (Mouse), this protein is Nectin-1.